Here is a 337-residue protein sequence, read N- to C-terminus: Ketol-acid reductoisomerase (NADP(+)) (337 aa).

In terms of domain architecture, KARI N-terminal Rossmann spans 1–180 (MQVYYDKDAD…GGTKGGVIET (180 aa)). NADP(+) is bound by residues 24–27 (YGSQ), R47, and S51. The active site involves H106. G132 is an NADP(+) binding site. A KARI C-terminal knotted domain is found at 181–326 (TFREETETDL…AQLRAMMPWI (146 aa)). The Mg(2+) site is built by D189, E193, E225, and E229. S250 contributes to the substrate binding site.

Belongs to the ketol-acid reductoisomerase family. Requires Mg(2+) as cofactor.

The enzyme catalyses (2R)-2,3-dihydroxy-3-methylbutanoate + NADP(+) = (2S)-2-acetolactate + NADPH + H(+). The catalysed reaction is (2R,3R)-2,3-dihydroxy-3-methylpentanoate + NADP(+) = (S)-2-ethyl-2-hydroxy-3-oxobutanoate + NADPH + H(+). It functions in the pathway amino-acid biosynthesis; L-isoleucine biosynthesis; L-isoleucine from 2-oxobutanoate: step 2/4. Its pathway is amino-acid biosynthesis; L-valine biosynthesis; L-valine from pyruvate: step 2/4. Its function is as follows. Involved in the biosynthesis of branched-chain amino acids (BCAA). Catalyzes an alkyl-migration followed by a ketol-acid reduction of (S)-2-acetolactate (S2AL) to yield (R)-2,3-dihydroxy-isovalerate. In the isomerase reaction, S2AL is rearranged via a Mg-dependent methyl migration to produce 3-hydroxy-3-methyl-2-ketobutyrate (HMKB). In the reductase reaction, this 2-ketoacid undergoes a metal-dependent reduction by NADPH to yield (R)-2,3-dihydroxy-isovalerate. The chain is Ketol-acid reductoisomerase (NADP(+)) from Neisseria meningitidis serogroup A / serotype 4A (strain DSM 15465 / Z2491).